The chain runs to 413 residues: Multifunctional CCA protein (413 aa).

Positions 8 and 11 each coordinate ATP. Residues glycine 8 and arginine 11 each coordinate CTP. Mg(2+) contacts are provided by aspartate 21 and aspartate 23. Residues arginine 91, arginine 143, and arginine 146 each coordinate ATP. 3 residues coordinate CTP: arginine 91, arginine 143, and arginine 146. Positions 232–333 (TGVHVMMVVD…VRFFERSDAL (102 aa)) constitute an HD domain.

Belongs to the tRNA nucleotidyltransferase/poly(A) polymerase family. Bacterial CCA-adding enzyme type 1 subfamily. Monomer. Can also form homodimers and oligomers. It depends on Mg(2+) as a cofactor. Requires Ni(2+) as cofactor.

It carries out the reaction a tRNA precursor + 2 CTP + ATP = a tRNA with a 3' CCA end + 3 diphosphate. The catalysed reaction is a tRNA with a 3' CCA end + 2 CTP + ATP = a tRNA with a 3' CCACCA end + 3 diphosphate. Catalyzes the addition and repair of the essential 3'-terminal CCA sequence in tRNAs without using a nucleic acid template. Adds these three nucleotides in the order of C, C, and A to the tRNA nucleotide-73, using CTP and ATP as substrates and producing inorganic pyrophosphate. tRNA 3'-terminal CCA addition is required both for tRNA processing and repair. Also involved in tRNA surveillance by mediating tandem CCA addition to generate a CCACCA at the 3' terminus of unstable tRNAs. While stable tRNAs receive only 3'-terminal CCA, unstable tRNAs are marked with CCACCA and rapidly degraded. This Burkholderia ambifaria (strain MC40-6) protein is Multifunctional CCA protein.